The sequence spans 265 residues: Mlc titration factor A (265 aa).

Zn(2+) contacts are provided by histidine 111, histidine 148, histidine 152, and glutamate 211.

It belongs to the MtfA family. Interacts with Mlc. The cofactor is Zn(2+).

The protein localises to the cytoplasm. Involved in the modulation of the activity of the glucose-phosphotransferase system (glucose-PTS). Interacts with the transcriptional repressor Mlc, preventing its interaction with DNA and leading to the modulation of expression of genes regulated by Mlc, including ptsG, which encodes the PTS system glucose-specific EIICB component. Its function is as follows. Shows zinc-dependent metallopeptidase activity. The chain is Mlc titration factor A from Escherichia coli O7:K1 (strain IAI39 / ExPEC).